The primary structure comprises 1449 residues: Disease resistance protein RPP5 (1449 aa).

The TIR domain occupies 10 to 178 (RRYDVFPSFS…KISNDVSNKL (169 aa)). Residue Glu85 is part of the active site. Positions 192–446 (EAHIEAIKSV…IACLFNGFEV (255 aa)) constitute an NB-ARC domain. 19 LRR repeats span residues 549–573 (MRNLQYLKIGDWSDGGQPQSLVYLP), 574–595 (LKLRLLDWDDCPLKSLPSTFKA), 597–618 (YLVNLIMKYSKLEKLWEGTLPL), 619–642 (GSLKKMNLLCSKNLKEIPDLSNAR), 644–665 (LEELDLEGCESLVTLPSSIQNA), 687–710 (MCNLEYLSVDCSRVEGTQGIVYFP), 712–732 (KLRLLLWNNCPLKRLHSNFKV), 733–755 (EYLVKLRMENSDLEKLWDGTQPL), 756–779 (GRLKQMFLRGSKYLKEIPDLSLAI), 802–825 (AIKLIYLDISDCKKLESFPTDLNL), 826–849 (ESLEYLNLTGCPNLRNFPAIKMGC), 915–939 (LGSLEEMDLSESENLTEIPDLSKAT), 941–962 (LKHLYLNNCKSLVTLPSTIGNL), 963–985 (QKLVRLEMKECTGLEVLPTDVNL), 986–1011 (SSLETLDLSGCSSLRTFPLISKSIKW), 1028–1052 (ATKLESLILNNCKSLVTLPSTIGNL), 1053–1077 (QNLRRLYMKRCTGLEVLPTDVNLSS), 1096–1119 (STNIVWLYLENTAIGEVPCCIEDF), and 1120–1143 (TRLRVLLMYCCQRLKNISPNIFRL).

Interacts with RSH1.

It carries out the reaction NAD(+) + H2O = ADP-D-ribose + nicotinamide + H(+). Functionally, TIR-NB-LRR receptor-like protein that confers resistance to the pathogen Hyaloperonospora arabidopsis isolate Noco2 (downy mildew disease). Confers resistance to H.arabidopsis isolates Emoy2, Emwa1 and Noco2. The chain is Disease resistance protein RPP5 from Arabidopsis thaliana (Mouse-ear cress).